The chain runs to 258 residues: Large ribosomal subunit protein eL8z (258 aa).

Residues 1-20 form a disordered region; that stretch reads MAPKRGGRAPVPAKKKTEKV.

The protein belongs to the eukaryotic ribosomal protein eL8 family.

This Oryza sativa subsp. japonica (Rice) protein is Large ribosomal subunit protein eL8z (RPL7A-1).